Reading from the N-terminus, the 474-residue chain is Fumarate hydratase class II (474 aa).

Substrate-binding positions include 104-106 (SGT), 128-131 (HPND), 138-140 (SSN), and Thr-186. The Proton donor/acceptor role is filled by His-187. Residue Ser-318 is part of the active site. Residues Ser-319 and 324–326 (KVN) each bind substrate.

Belongs to the class-II fumarase/aspartase family. Fumarase subfamily. In terms of assembly, homotetramer.

The protein localises to the cytoplasm. The catalysed reaction is (S)-malate = fumarate + H2O. Its pathway is carbohydrate metabolism; tricarboxylic acid cycle; (S)-malate from fumarate: step 1/1. Functionally, involved in the TCA cycle. Catalyzes the stereospecific interconversion of fumarate to L-malate. The sequence is that of Fumarate hydratase class II from Mycobacterium bovis (strain ATCC BAA-935 / AF2122/97).